The sequence spans 436 residues: L-threonine dehydratase biosynthetic IlvA (436 aa).

Positions 1–357 (MSETYVSEKS…HRGLKHYFLV (357 aa)) are catalytic. Residue Lys-70 is modified to N6-(pyridoxal phosphate)lysine. Residues Asn-97, 203 to 207 (GGGGL), and Ser-329 each bind pyridoxal 5'-phosphate. Residues 353–427 (HYFLVNFPQK…SAIDSRRLEP (75 aa)) enclose the ACT-like domain. Residues 358 to 436 (NFPQKPGQLR…PGTPEYEYLT (79 aa)) are regulatory.

The protein belongs to the serine/threonine dehydratase family. In terms of assembly, homotetramer. Pyridoxal 5'-phosphate serves as cofactor.

The enzyme catalyses L-threonine = 2-oxobutanoate + NH4(+). Its pathway is amino-acid biosynthesis; L-isoleucine biosynthesis; 2-oxobutanoate from L-threonine: step 1/1. Catalyzes the anaerobic formation of alpha-ketobutyrate and ammonia from threonine in a two-step reaction. The first step involved a dehydration of threonine and a production of enamine intermediates (aminocrotonate), which tautomerizes to its imine form (iminobutyrate). Both intermediates are unstable and short-lived. The second step is the nonenzymatic hydrolysis of the enamine/imine intermediates to form 2-ketobutyrate and free ammonia. In the low water environment of the cell, the second step is accelerated by RidA. This is L-threonine dehydratase biosynthetic IlvA (ilvA) from Corynebacterium glutamicum (strain ATCC 13032 / DSM 20300 / JCM 1318 / BCRC 11384 / CCUG 27702 / LMG 3730 / NBRC 12168 / NCIMB 10025 / NRRL B-2784 / 534).